A 396-amino-acid chain; its full sequence is Probable glucan endo-1,6-beta-glucosidase B (396 aa).

A signal peptide spans 1 to 17 (MIRRLAAFSALSGLATA). Asparagine 30 carries an N-linked (GlcNAc...) asparagine glycan. Catalysis depends on glutamate 219, which acts as the Proton donor. N-linked (GlcNAc...) asparagine glycosylation is present at asparagine 272. Glutamate 320 serves as the catalytic Nucleophile.

The protein belongs to the glycosyl hydrolase 5 (cellulase A) family.

The protein localises to the secreted. The enzyme catalyses Random hydrolysis of (1-&gt;6)-linkages in (1-&gt;6)-beta-D-glucans.. Its function is as follows. Beta-glucanases participate in the metabolism of beta-glucan, the main structural component of the cell wall. Acts on lutean, pustulan and 1,6-oligo-beta-D-glucosides. The polypeptide is Probable glucan endo-1,6-beta-glucosidase B (exgB) (Aspergillus fumigatus (strain ATCC MYA-4609 / CBS 101355 / FGSC A1100 / Af293) (Neosartorya fumigata)).